Here is a 328-residue protein sequence, read N- to C-terminus: L-lactate dehydrogenase (328 aa).

Residues V18, E39, K46, Y71, and 85–86 each bind NAD(+); that span reads GA. The substrate site is built by Q88 and R94. Residues S107, 124–126, and S149 contribute to the NAD(+) site; that span reads AAN. Position 126 to 129 (126 to 129) interacts with substrate; the sequence is NPVD. 154–157 is a binding site for substrate; it reads DSAR. The beta-D-fructose 1,6-bisphosphate site is built by R159 and H174. H181 acts as the Proton acceptor in catalysis. Phosphotyrosine is present on Y226. T235 contacts substrate.

It belongs to the LDH/MDH superfamily. LDH family. Homotetramer.

The protein resides in the cytoplasm. The enzyme catalyses (S)-lactate + NAD(+) = pyruvate + NADH + H(+). Its pathway is fermentation; pyruvate fermentation to lactate; (S)-lactate from pyruvate: step 1/1. Allosterically activated by fructose 1,6-bisphosphate (FBP). Catalyzes the conversion of lactate to pyruvate. This chain is L-lactate dehydrogenase, found in Streptococcus gordonii (strain Challis / ATCC 35105 / BCRC 15272 / CH1 / DL1 / V288).